A 101-amino-acid polypeptide reads, in one-letter code: Urease subunit beta (101 aa).

It belongs to the urease beta subunit family. In terms of assembly, heterotrimer of UreA (gamma), UreB (beta) and UreC (alpha) subunits. Three heterotrimers associate to form the active enzyme.

Its subcellular location is the cytoplasm. The enzyme catalyses urea + 2 H2O + H(+) = hydrogencarbonate + 2 NH4(+). It participates in nitrogen metabolism; urea degradation; CO(2) and NH(3) from urea (urease route): step 1/1. The chain is Urease subunit beta from Rhizobium johnstonii (strain DSM 114642 / LMG 32736 / 3841) (Rhizobium leguminosarum bv. viciae).